A 99-amino-acid chain; its full sequence is Large ribosomal subunit protein bL27 (99 aa).

The propeptide occupies Met1 to Phe12. A disordered region spans residues His15–Arg36.

Belongs to the bacterial ribosomal protein bL27 family. In terms of processing, the N-terminus is cleaved by ribosomal processing cysteine protease Prp.

This is Large ribosomal subunit protein bL27 from Lactobacillus johnsonii (strain CNCM I-12250 / La1 / NCC 533).